We begin with the raw amino-acid sequence, 127 residues long: uncharacterized protein (127 aa).

Helical transmembrane passes span 20–42 (NMIW…FMSS), 54–76 (IYFC…IFVY), and 91–110 (WILI…ASFT).

It is found in the membrane. Its subcellular location is the cytoplasm. This is an uncharacterized protein from Schizosaccharomyces pombe (strain 972 / ATCC 24843) (Fission yeast).